The primary structure comprises 2867 residues: Reticulocyte-binding protein 2 (2867 aa).

The first 21 residues, 1 to 21 (MEKNVLWVIFYNFLVILLASC), serve as a signal peptide directing secretion. Over 22–2805 (NDSNRSKSNS…TAKEAIGKTR (2784 aa)) the chain is Extracellular. 3 disordered regions span residues 52-73 (KYNN…NNHN), 2650-2682 (ETKT…ASVP), and 2712-2799 (DNTH…TAKE). The span at 61-73 (NIGNQINNDNNHN) shows a compositional bias: low complexity. Residues 2659–2674 (KAKEEKVPPKETENRA) show a composition bias toward basic and acidic residues. The segment covering 2725 to 2736 (DSISAPQEQVEY) has biased composition (polar residues). A compositionally biased stretch (acidic residues) spans 2743-2754 (ENDETTEEESEH). A compositionally biased stretch (basic and acidic residues) spans 2755 to 2799 (DDAHDDTHDDTHDDTHDDTHDDTHDDTHDDTHDESQTGRDSTAKE). 7 repeat units span residues 2758–2761 (HDDT), 2762–2765 (HDDT), 2766–2769 (HDDT), 2770–2773 (HDDT), 2774–2777 (HDDT), 2778–2781 (HDDT), and 2782–2785 (HDDT). The tract at residues 2758 to 2785 (HDDTHDDTHDDTHDDTHDDTHDDTHDDT) is 7 X 4 AA tandem repeats of H-D-D-T. Residues 2806-2826 (LAGAVIIAMSVLSGFIIIVFK) traverse the membrane as a helical segment. The Cytoplasmic portion of the chain corresponds to 2827–2867 (DKDEEEKDHNEHGYNEAFGEHDEYNMHDKEEVIEVCFNEED).

Its subcellular location is the cell membrane. In terms of biological role, involved in reticulocyte adhesion. Specifically binds to human reticulocyte cells. This is Reticulocyte-binding protein 2 (RBP-2) from Plasmodium vivax (strain Belem).